The primary structure comprises 315 residues: PIH1 domain-containing protein 2 (315 aa).

Belongs to the PIH1 family.

In Bos taurus (Bovine), this protein is PIH1 domain-containing protein 2 (PIH1D2).